The chain runs to 253 residues: Imidazole glycerol phosphate synthase subunit HisF (253 aa).

Active-site residues include Asp11 and Asp130.

The protein belongs to the HisA/HisF family. As to quaternary structure, heterodimer of HisH and HisF.

It localises to the cytoplasm. The catalysed reaction is 5-[(5-phospho-1-deoxy-D-ribulos-1-ylimino)methylamino]-1-(5-phospho-beta-D-ribosyl)imidazole-4-carboxamide + L-glutamine = D-erythro-1-(imidazol-4-yl)glycerol 3-phosphate + 5-amino-1-(5-phospho-beta-D-ribosyl)imidazole-4-carboxamide + L-glutamate + H(+). It participates in amino-acid biosynthesis; L-histidine biosynthesis; L-histidine from 5-phospho-alpha-D-ribose 1-diphosphate: step 5/9. In terms of biological role, IGPS catalyzes the conversion of PRFAR and glutamine to IGP, AICAR and glutamate. The HisF subunit catalyzes the cyclization activity that produces IGP and AICAR from PRFAR using the ammonia provided by the HisH subunit. The polypeptide is Imidazole glycerol phosphate synthase subunit HisF (Geobacter sulfurreducens (strain ATCC 51573 / DSM 12127 / PCA)).